The sequence spans 345 residues: Arginine-hydroxylase NDUFAF5, mitochondrial (345 aa).

The transit peptide at 1–36 (MLRPAGLWRLCRRPWAARVPAENLGRREVTSGVSPR) directs the protein to the mitochondrion.

This sequence belongs to the methyltransferase superfamily. In terms of assembly, interacts with NDUFAF8, leading to stabilize NDUFAF5. Interacts with NDUFS7. Interacts with PYURF (via TRM112 domain); the interaction is direct and stabilizes NDUFAF5 protein.

It is found in the mitochondrion inner membrane. Its function is as follows. Arginine hydroxylase that mediates hydroxylation of 'Arg-111' of NDUFS7 and is involved in the assembly of mitochondrial NADH:ubiquinone oxidoreductase complex (complex I, MT-ND1) at early stages. May also have methyltransferase activity. The sequence is that of Arginine-hydroxylase NDUFAF5, mitochondrial from Homo sapiens (Human).